Here is a 256-residue protein sequence, read N- to C-terminus: 7-cyano-7-deazaguanine synthase (256 aa).

Residues 1 to 22 (MTDASADALTSPSNSGASQDTS) are disordered. Residues 8-22 (ALTSPSNSGASQDTS) are compositionally biased toward polar residues. Residue 30-40 (LSGGLDSVTCL) participates in ATP binding. Zn(2+) is bound by residues Cys-220, Cys-230, Cys-233, and Cys-236.

This sequence belongs to the QueC family. The cofactor is Zn(2+).

The enzyme catalyses 7-carboxy-7-deazaguanine + NH4(+) + ATP = 7-cyano-7-deazaguanine + ADP + phosphate + H2O + H(+). It participates in purine metabolism; 7-cyano-7-deazaguanine biosynthesis. In terms of biological role, catalyzes the ATP-dependent conversion of 7-carboxy-7-deazaguanine (CDG) to 7-cyano-7-deazaguanine (preQ(0)). The polypeptide is 7-cyano-7-deazaguanine synthase (Psychrobacter sp. (strain PRwf-1)).